An 885-amino-acid chain; its full sequence is Alanine--tRNA ligase (885 aa).

Zn(2+) contacts are provided by histidine 564, histidine 568, cysteine 676, and histidine 680.

It belongs to the class-II aminoacyl-tRNA synthetase family. Zn(2+) is required as a cofactor.

It localises to the cytoplasm. The catalysed reaction is tRNA(Ala) + L-alanine + ATP = L-alanyl-tRNA(Ala) + AMP + diphosphate. Its function is as follows. Catalyzes the attachment of alanine to tRNA(Ala) in a two-step reaction: alanine is first activated by ATP to form Ala-AMP and then transferred to the acceptor end of tRNA(Ala). Also edits incorrectly charged Ser-tRNA(Ala) and Gly-tRNA(Ala) via its editing domain. In Brucella ovis (strain ATCC 25840 / 63/290 / NCTC 10512), this protein is Alanine--tRNA ligase.